The following is a 287-amino-acid chain: Large ribosomal subunit protein uL2 (287 aa).

Residues 216–287 form a disordered region; it reads RRPEVRGSVM…SKRGRGGRDA (72 aa). The segment covering 271–287 has biased composition (basic residues); it reads QRRRRKSSKRGRGGRDA.

It belongs to the universal ribosomal protein uL2 family. In terms of assembly, part of the 50S ribosomal subunit. Forms a bridge to the 30S subunit in the 70S ribosome.

In terms of biological role, one of the primary rRNA binding proteins. Required for association of the 30S and 50S subunits to form the 70S ribosome, for tRNA binding and peptide bond formation. It has been suggested to have peptidyltransferase activity; this is somewhat controversial. Makes several contacts with the 16S rRNA in the 70S ribosome. The chain is Large ribosomal subunit protein uL2 from Synechococcus sp. (strain ATCC 27144 / PCC 6301 / SAUG 1402/1) (Anacystis nidulans).